Reading from the N-terminus, the 285-residue chain is Isoprenyl transferase 2 (285 aa).

The interval 11–30 (RREYRAPEPHPSGARAPKLP) is disordered. The active site involves Asp43. Asp43 is a binding site for Mg(2+). Substrate is bound by residues 44 to 47 (GNGR), Trp48, Arg56, His60, and 88 to 90 (STE). The Proton acceptor role is filled by Asn91. Residues Trp92, Arg94, Arg211, and 217 to 219 (RTS) contribute to the substrate site. Mg(2+) is bound at residue Glu230.

Belongs to the UPP synthase family. In terms of assembly, homodimer. It depends on Mg(2+) as a cofactor.

Functionally, catalyzes the condensation of isopentenyl diphosphate (IPP) with allylic pyrophosphates generating different type of terpenoids. The sequence is that of Isoprenyl transferase 2 from Streptomyces avermitilis (strain ATCC 31267 / DSM 46492 / JCM 5070 / NBRC 14893 / NCIMB 12804 / NRRL 8165 / MA-4680).